We begin with the raw amino-acid sequence, 498 residues long: DEAD-box ATP-dependent RNA helicase 6 (498 aa).

The disordered stretch occupies residues 1 to 109 (MDPRARYPPG…WKAQLKLPPQ (109 aa)). A compositionally biased stretch (basic residues) spans 33 to 49 (QHQHQHQQPPHPHHHQY). Low complexity-rich tracts occupy residues 50 to 61 (VQRQPQPQQTPH) and 75 to 86 (AAEAAGASEQKA). A Q motif motif is present at residues 124–152 (NEFEDYFLKRELLMGIYEKGFERPSPIQE). In terms of domain architecture, Helicase ATP-binding spans 155-325 (IPIALTGSDI…DKYLPKPYVI (171 aa)). ATP is bound at residue 168-175 (AKNGTGKT). The DEAD box signature appears at 273–276 (DEAD). A Helicase C-terminal domain is found at 335–495 (GITQFYAFVE…PIPPQIDRAI (161 aa)).

It belongs to the DEAD box helicase family. DDX6/DHH1 subfamily.

It localises to the cytoplasm. The protein localises to the P-body. It catalyses the reaction ATP + H2O = ADP + phosphate + H(+). Functionally, ATP-dependent RNA helicase involved in mRNA turnover, and more specifically in mRNA decapping. The chain is DEAD-box ATP-dependent RNA helicase 6 from Oryza sativa subsp. japonica (Rice).